The sequence spans 565 residues: Deformed epidermal autoregulatory factor 1 homolog (565 aa).

Disordered stretches follow at residues 34 to 62 (GGEA…ETPR) and 162 to 190 (GLKG…KGGT). The segment covering 169-181 (PLTPGPQSPPTPL) has biased composition (pro residues). Phosphothreonine is present on threonine 171. Serine 176 is subject to Phosphoserine. Threonine 179 is subject to Phosphothreonine. The SAND domain maps to 193-273 (NWDPSVYDSE…QCLIQDGILN (81 aa)). Residues 301 to 316 (KRRKKENELPTTPVKK) carry the Nuclear localization signal motif. The interaction with LMO4 stretch occupies residues 403-478 (IAPFPEAALP…QLKTLFEQAK (76 aa)). Residue threonine 432 is modified to Phosphothreonine. Serine 448 is modified (phosphoserine). Zn(2+)-binding residues include cysteine 504, cysteine 507, cysteine 515, cysteine 518, cysteine 524, cysteine 528, histidine 536, and cysteine 540. An MYND-type zinc finger spans residues 504–540 (CVNCGREAMNECTGCHKVNYCSTFCQRKDWKDHQHIC).

Homodimer. Interacts with LMO4; LMO4 blocks export from nucleus. Interacts with LMO2 and CLIM2. May interact with the corepressors NCOR1 and NCRO2. Identified in a complex with XRCC5 and XRCC6. Interacts (via the SAND domain) with the DNA-PK complex subunit XRCC6; the interaction is direct and may be inhibited by DNA-binding. In terms of processing, may be phosphorylated by DNA-PK complex in a DNA independent manner (in vitro).

It is found in the nucleus. Transcription factor that binds to sequence with multiple copies of 5'-TTC[CG]G-3' present in its own promoter and that of the HNRPA2B1 gene. Down-regulates transcription of these genes. Binds to the retinoic acid response element (RARE) 5'-AGGGTTCACCGAAAGTTCA-3'. Activates the proenkephalin gene independently of promoter binding, probably through protein-protein interaction. Regulates epithelial cell proliferation and side-branching in the mammary gland. Required for neural tube closure and skeletal patterning. Controls the expression of peripheral tissue antigens in pancreatic lymph nodes. Transcriptional activator of EIF4G3. May also involved in behavior. This Pan troglodytes (Chimpanzee) protein is Deformed epidermal autoregulatory factor 1 homolog (DEAF1).